The following is an 83-amino-acid chain: Large ribosomal subunit protein bL27c (83 aa).

The interval 1-21 (MAHKKGAGSTKNGRDSNAKRL) is disordered.

The protein belongs to the bacterial ribosomal protein bL27 family.

Its subcellular location is the plastid. The protein localises to the chloroplast. This is Large ribosomal subunit protein bL27c from Phaeodactylum tricornutum (strain CCAP 1055/1).